A 242-amino-acid polypeptide reads, in one-letter code: Uridylate kinase (242 aa).

12 to 15 is a binding site for ATP; that stretch reads KLSG. An involved in allosteric activation by GTP region spans residues 20–25; it reads GDEGFG. G54 provides a ligand contact to UMP. Residues G55 and R59 each contribute to the ATP site. Residues D74 and 135–142 contribute to the UMP site; that span reads TGSPFFTT. The ATP site is built by T162, Y168, and D171.

The protein belongs to the UMP kinase family. In terms of assembly, homohexamer.

It is found in the cytoplasm. The catalysed reaction is UMP + ATP = UDP + ADP. It functions in the pathway pyrimidine metabolism; CTP biosynthesis via de novo pathway; UDP from UMP (UMPK route): step 1/1. Its activity is regulated as follows. Allosterically activated by GTP. Inhibited by UTP. Catalyzes the reversible phosphorylation of UMP to UDP. The protein is Uridylate kinase of Pasteurella multocida (strain Pm70).